The following is an 87-amino-acid chain: MDNVVLIGKKPVMNYVVAVLTQLTSNDEVIIKARGKAINKAVDVAEMIRNRFIKDIKIKKIEIGTDKVKNPDGREVNVSTIEIVLAK.

N6-acetyllysine is present on K9.

It belongs to the histone-like Alba family. Post-translationally, acetylated. Acetylation at Lys-9 decreases DNA-binding affinity.

It is found in the cytoplasm. It localises to the chromosome. Functionally, binds double-stranded DNA tightly but without sequence specificity. Involved in DNA compaction. This chain is DNA/RNA-binding protein Alba, found in Methanocaldococcus jannaschii (strain ATCC 43067 / DSM 2661 / JAL-1 / JCM 10045 / NBRC 100440) (Methanococcus jannaschii).